A 652-amino-acid polypeptide reads, in one-letter code: DNA mismatch repair protein MutL (652 aa).

The protein belongs to the DNA mismatch repair MutL/HexB family.

Functionally, this protein is involved in the repair of mismatches in DNA. It is required for dam-dependent methyl-directed DNA mismatch repair. May act as a 'molecular matchmaker', a protein that promotes the formation of a stable complex between two or more DNA-binding proteins in an ATP-dependent manner without itself being part of a final effector complex. This is DNA mismatch repair protein MutL from Neorickettsia sennetsu (strain ATCC VR-367 / Miyayama) (Ehrlichia sennetsu).